The chain runs to 870 residues: Ubiquitin-protein ligase E3A (870 aa).

Serine 8 carries the phosphoserine modification. The segment at 42-81 adopts a C4-type; atypical zinc-finger fold; it reads CGNEACTNEFCASCPTFLRMDNNAAAIKALELYKINAKLC. The segment covering 171-180 has biased composition (basic and acidic residues); sequence EELKSLQEKD. Residues 171-223 form a disordered region; that stretch reads EELKSLQEKDEDKDEDEKEKAACSAAAMEEDSEASSSRMGDSSQGDNNVQKLG. Residues 208 to 220 show a composition bias toward polar residues; the sequence is RMGDSSQGDNNVQ. At serine 213 the chain carries Phosphoserine. The HECT domain occupies 542 to 870; the sequence is NPADLKKQLY…ITYAKGFGML (329 aa). Residue tyrosine 654 is modified to Phosphotyrosine; by ABL1. Cysteine 838 functions as the Glycyl thioester intermediate in the catalytic mechanism.

The active form is probably a homotrimer. Binds UBQLN1 and UBQLN2. Interacts with the 26S proteasome. Interacts with BPY2. Interacts with HIF1AN, MAPK6 and NEURL4; interaction with MAPK6 may be mediated by NEURL4. Interacts with the proteasomal subunit PSMD4. Interacts with BMAL1. Interacts with ARC. Interacts with ESR1 and WBP2. Phosphorylation at Tyr-654 by ABL1 impairs E3 ligase activity. In terms of tissue distribution, widely expressed. Most abundant in brain, heart and thymus.

Its subcellular location is the cytoplasm. It localises to the nucleus. The enzyme catalyses S-ubiquitinyl-[E2 ubiquitin-conjugating enzyme]-L-cysteine + [acceptor protein]-L-lysine = [E2 ubiquitin-conjugating enzyme]-L-cysteine + N(6)-ubiquitinyl-[acceptor protein]-L-lysine.. It participates in protein modification; protein ubiquitination. Functionally, E3 ubiquitin-protein ligase which accepts ubiquitin from an E2 ubiquitin-conjugating enzyme in the form of a thioester and transfers it to its substrates. Several substrates have been identified including the BMAL1, ARC, LAMTOR1, RAD23A and RAD23B, MCM7 (which is involved in DNA replication), annexin A1, the PML tumor suppressor, and the cell cycle regulator CDKN1B. Additionally, may function as a cellular quality control ubiquitin ligase by helping the degradation of the cytoplasmic misfolded proteins. Finally, UBE3A also promotes its own degradation in vivo. Plays an important role in the regulation of the circadian clock: involved in the ubiquitination of the core clock component BMAL1, leading to its proteasomal degradation. Acts as a regulator of synaptic development by mediating ubiquitination and degradation of ARC. Required for synaptic remodeling in neurons by mediating ubiquitination and degradation of LAMTOR1, thereby limiting mTORC1 signaling and activity-dependent synaptic remodeling. Synergizes with WBP2 in enhancing PGR activity. In Mus musculus (Mouse), this protein is Ubiquitin-protein ligase E3A.